Consider the following 402-residue polypeptide: Alkaline proteinase (402 aa).

The signal sequence occupies residues 1–20 (MVTLRRLAVLLGAIPAALAA). Residues 21–120 (PTTQKREVVP…EQDEGEFSTA (100 aa)) constitute a propeptide that is removed on maturation. The region spanning 32-108 (KYIVTLKEGA…EVEEDQIWHL (77 aa)) is the Inhibitor I9 domain. In terms of domain architecture, Peptidase S8 spans 128–402 (AWGLGTISHR…NRILYNGNGA (275 aa)). Catalysis depends on charge relay system residues Asp-160, His-191, and Ser-347. The segment covering 382-392 (GRVSNPGSGSP) has biased composition (polar residues). Residues 382–402 (GRVSNPGSGSPNRILYNGNGA) form a disordered region.

Belongs to the peptidase S8 family.

This chain is Alkaline proteinase (ALP), found in Hapsidospora chrysogena (Acremonium chrysogenum).